The sequence spans 418 residues: Serine/threonine transporter SstT (418 aa).

The next 8 membrane-spanning stretches (helical) occupy residues 21–41 (ILIGLVAGIVLALVSTPAAIA), 49–69 (FVGALKAVAPVLVLMLVIASI), 83–103 (ILFLYVLGTFSAALVAVVVSF), 142–162 (ALLNANYIGILAWAVGLGIAL), 190–210 (FAPLGIFGLVASTIAATGFGA), 217–237 (LLVVLIGCMLLVALVVNPLIV), 299–319 (MAGAAITITVLTLAAVHTLGI), and 331–351 (VVAAICACGASGVAGGSLLLI).

This sequence belongs to the dicarboxylate/amino acid:cation symporter (DAACS) (TC 2.A.23) family.

The protein localises to the cell inner membrane. The catalysed reaction is L-serine(in) + Na(+)(in) = L-serine(out) + Na(+)(out). It catalyses the reaction L-threonine(in) + Na(+)(in) = L-threonine(out) + Na(+)(out). In terms of biological role, involved in the import of serine and threonine into the cell, with the concomitant import of sodium (symport system). The chain is Serine/threonine transporter SstT from Yersinia pestis bv. Antiqua (strain Antiqua).